The following is a 351-amino-acid chain: Histidinol-phosphate aminotransferase (351 aa).

Lysine 221 carries the N6-(pyridoxal phosphate)lysine modification.

Belongs to the class-II pyridoxal-phosphate-dependent aminotransferase family. Histidinol-phosphate aminotransferase subfamily. In terms of assembly, homodimer. Pyridoxal 5'-phosphate serves as cofactor.

The catalysed reaction is L-histidinol phosphate + 2-oxoglutarate = 3-(imidazol-4-yl)-2-oxopropyl phosphate + L-glutamate. The protein operates within amino-acid biosynthesis; L-histidine biosynthesis; L-histidine from 5-phospho-alpha-D-ribose 1-diphosphate: step 7/9. The chain is Histidinol-phosphate aminotransferase from Staphylococcus epidermidis (strain ATCC 35984 / DSM 28319 / BCRC 17069 / CCUG 31568 / BM 3577 / RP62A).